The sequence spans 127 residues: Histone H2B type 1-A (127 aa).

Residue Pro-2 is modified to N-acetylproline. An N6-acetyllysine; alternate mark is found at Lys-7, Lys-13, Lys-14, Lys-17, Lys-18, Lys-22, and Lys-25. N6-crotonyllysine; alternate occurs at positions 7, 13, 14, 17, 18, 22, 25, and 36. N6-lactoyllysine; alternate occurs at positions 7 and 13. A Glycyl lysine isopeptide (Lys-Gly) (interchain with G-Cter in SUMO2); alternate cross-link involves residue Lys-7. 4 positions are modified to N6-lactoyllysine; alternate: Lys-17, Lys-18, Lys-22, and Lys-25. Residue Lys-22 forms a Glycyl lysine isopeptide (Lys-Gly) (interchain with G-Cter in SUMO2); alternate linkage. An N6-succinyllysine; alternate modification is found at Lys-36. Residue Lys-36 forms a Glycyl lysine isopeptide (Lys-Gly) (interchain with G-Cter in ubiquitin); alternate linkage. Ser-38 carries the post-translational modification Phosphoserine. Lys-45 bears the N6-lactoyllysine; alternate mark. Lys-48 bears the N6-methyllysine mark. N6,N6-dimethyllysine is present on Lys-59. At Arg-81 the chain carries Dimethylated arginine. Lys-87 carries the post-translational modification N6-acetyllysine; alternate. An N6-lactoyllysine; alternate modification is found at Lys-87. Lys-87 is subject to N6,N6,N6-trimethyllysine; alternate. An omega-N-methylarginine mark is found at Arg-88 and Arg-94. Residue Lys-110 is modified to N6-lactoyllysine; alternate. The residue at position 110 (Lys-110) is an N6-methyllysine. A Phosphothreonine modification is found at Thr-117. Lys-118 and Lys-122 each carry N6-lactoyllysine; alternate. N6-succinyllysine; alternate occurs at positions 118 and 122. Lys-118 carries the post-translational modification N6-methylated lysine; alternate. Lys-122 is covalently cross-linked (Glycyl lysine isopeptide (Lys-Gly) (interchain with G-Cter in ubiquitin); alternate).

This sequence belongs to the histone H2B family. As to quaternary structure, the nucleosome is a histone octamer containing two molecules each of H2A, H2B, H3 and H4 assembled in one H3-H4 heterotetramer and two H2A-H2B heterodimers. Interacts with H2AB1; preferentially dimerizes with H2AB1 to form nucleosomes. Post-translationally, monoubiquitination at Lys-36 by the MSL1/MSL2 dimer is required for histone H3 'Lys-4' (H3K4me) and 'Lys-79' (H3K79me) methylation and transcription activation at specific gene loci, such as HOXA9 and MEIS1 loci. Similarly, monoubiquitination of Lys-122 (H2BK120Ub) by the RNF20/40 complex gives a specific tag for epigenetic transcriptional activation and is also prerequisite for histone H3 'Lys-4' and 'Lys-79' methylation. It also functions cooperatively with the FACT dimer to stimulate elongation by RNA polymerase II. H2BK120Ub also acts as a regulator of mRNA splicing: deubiquitination by USP49 is required for efficient cotranscriptional splicing of a large set of exons. Crotonylation (Kcr) is specifically present in male germ cells and marks testis-specific genes in post-meiotic cells, including X-linked genes that escape sex chromosome inactivation in haploid cells. Crotonylation marks active promoters and enhancers and confers resistance to transcriptional repressors. It is also associated with post-meiotically activated genes on autosomes. In terms of processing, acetylated during spermatogenesis. Acetylated form is most abundant in spermatogonia compared to spermatocytes and round spermatids. Post-translationally, phosphorylated at Thr-117 in spermatogonia, spermatocytes and round spermatids. Methylated at Lys-118 in spermatogonia, spermatocytes and round spermatids. In terms of processing, lactylated in macrophages by EP300/P300 by using lactoyl-CoA directly derived from endogenous or exogenous lactate, leading to stimulates gene transcription. As to expression, mainly expressed in testis, and the corresponding protein is also present in mature sperm. Also present in metaphase oocytes (at protein level).

Its subcellular location is the nucleus. The protein localises to the chromosome. Functionally, variant histone specifically required to direct the transformation of dissociating nucleosomes to protamine in male germ cells. Entirely replaces classical histone H2B prior nucleosome to protamine transition and probably acts as a nucleosome dissociating factor that creates a more dynamic chromatin, facilitating the large-scale exchange of histones. In condensing spermatids, the heterodimer between H2AB1 and H2BC1/TH2B is loaded onto the nucleosomes and promotes loading of transition proteins (TNP1 and TNP2) onto the nucleosomes. Inclusion of the H2AB1-H2BC1/TH2B dimer into chromatin opens the nucleosomes, releasing the nucleosomal DNA ends and allowing the invasion of nucleosomes by transition proteins (TNP1 and TNP2). Then, transition proteins drive the recruitment and processing of protamines, which are responsible for histone eviction. Also expressed maternally and is present in the female pronucleus, suggesting a similar role in protamine replacement by nucleosomes at fertilization. Core component of nucleosome. Nucleosomes wrap and compact DNA into chromatin, limiting DNA accessibility to the cellular machineries which require DNA as a template. Histones thereby play a central role in transcription regulation, DNA repair, DNA replication and chromosomal stability. DNA accessibility is regulated via a complex set of post-translational modifications of histones, also called histone code, and nucleosome remodeling. This chain is Histone H2B type 1-A, found in Mus musculus (Mouse).